Consider the following 108-residue polypeptide: uncharacterized protein (108 aa).

This is an uncharacterized protein from Pasteurella multocida (strain Pm70).